A 382-amino-acid polypeptide reads, in one-letter code: Ribosomal RNA large subunit methyltransferase G (382 aa).

Belongs to the methyltransferase superfamily. RlmG family.

It is found in the cytoplasm. It catalyses the reaction guanosine(1835) in 23S rRNA + S-adenosyl-L-methionine = N(2)-methylguanosine(1835) in 23S rRNA + S-adenosyl-L-homocysteine + H(+). Specifically methylates the guanine in position 1835 (m2G1835) of 23S rRNA. In Aliivibrio salmonicida (strain LFI1238) (Vibrio salmonicida (strain LFI1238)), this protein is Ribosomal RNA large subunit methyltransferase G.